An 80-amino-acid chain; its full sequence is Omega-conotoxin-like PuIA (80 aa).

The signal sequence occupies residues 1–22 (MKLTCVMIVAVLFLTAWTFVTA). A propeptide spanning residues 23–50 (DSIRALEDLFAKAPDEMENSGASPLNER) is cleaved from the precursor. 3 disulfide bridges follow: C52-C70, C59-C74, and C69-C78.

This sequence belongs to the conotoxin O1 superfamily. In terms of tissue distribution, expressed by the venom duct.

The protein resides in the secreted. Functionally, omega-conotoxins act at presynaptic membranes, they bind and block voltage-gated calcium channels (Cav). The protein is Omega-conotoxin-like PuIA of Conus pulicarius (Flea-bitten cone).